We begin with the raw amino-acid sequence, 412 residues long: uncharacterized protein (412 aa).

Position 49 (histidine 49) interacts with Zn(2+). Glutamate 52 acts as the Proton acceptor in catalysis. Zn(2+) is bound by residues histidine 53 and glutamate 129.

This sequence belongs to the peptidase M16 family. The cofactor is Zn(2+).

This is an uncharacterized protein from Rickettsia typhi (strain ATCC VR-144 / Wilmington).